The sequence spans 208 residues: Small ribosomal subunit protein uS4 (208 aa).

An S4 RNA-binding domain is found at Gln-98–Leu-163.

It belongs to the universal ribosomal protein uS4 family. Part of the 30S ribosomal subunit. Contacts protein S5. The interaction surface between S4 and S5 is involved in control of translational fidelity.

Functionally, one of the primary rRNA binding proteins, it binds directly to 16S rRNA where it nucleates assembly of the body of the 30S subunit. Its function is as follows. With S5 and S12 plays an important role in translational accuracy. In Campylobacter jejuni (strain RM1221), this protein is Small ribosomal subunit protein uS4.